A 348-amino-acid polypeptide reads, in one-letter code: N-acetyl-gamma-glutamyl-phosphate reductase (348 aa).

Cys-151 is an active-site residue.

The protein belongs to the NAGSA dehydrogenase family. Type 1 subfamily.

It is found in the cytoplasm. The catalysed reaction is N-acetyl-L-glutamate 5-semialdehyde + phosphate + NADP(+) = N-acetyl-L-glutamyl 5-phosphate + NADPH + H(+). It participates in amino-acid biosynthesis; L-arginine biosynthesis; N(2)-acetyl-L-ornithine from L-glutamate: step 3/4. Functionally, catalyzes the NADPH-dependent reduction of N-acetyl-5-glutamyl phosphate to yield N-acetyl-L-glutamate 5-semialdehyde. The chain is N-acetyl-gamma-glutamyl-phosphate reductase from Lachnospira eligens (strain ATCC 27750 / DSM 3376 / VPI C15-48 / C15-B4) (Eubacterium eligens).